We begin with the raw amino-acid sequence, 199 residues long: V-type proton ATPase subunit E (199 aa).

The protein belongs to the V-ATPase E subunit family.

In terms of biological role, produces ATP from ADP in the presence of a proton gradient across the membrane. This Clostridium botulinum (strain Loch Maree / Type A3) protein is V-type proton ATPase subunit E.